Consider the following 255-residue polypeptide: MAVGKNKRLSKGKKGLKKKTDTFAKKDWYNIKAPGTFAVRDVGKTLVNRTTGLKNANDALKGRIFEVSLADLQKDEDHAFRKVKLRVDEVQGKNCLTNFHGLDFTSDKLRSLVRKWQTLIEANVVVKTTDDYLLRLFCIAFTKRRPNQVKKTTYAQSSQIRAIRKKMVEIMARDASSCTLAQLTQKLIPEVIGREIEKATQGIYPLQNVHVRKVKLLKAPKFDLGALLGLHGESSQDDSGQKVEREFKETVLEQV.

Ala2 carries the N-acetylalanine; partial modification.

It belongs to the eukaryotic ribosomal protein eS1 family. Component of the small ribosomal subunit. Mature ribosomes consist of a small (40S) and a large (60S) subunit. The 40S subunit contains about 33 different proteins and 1 molecule of RNA (18S). The 60S subunit contains about 49 different proteins and 3 molecules of RNA (25S, 5.8S and 5S).

Its subcellular location is the cytoplasm. The polypeptide is Small ribosomal subunit protein eS1 (rps1) (Pyrenophora tritici-repentis (strain Pt-1C-BFP) (Wheat tan spot fungus)).